Here is a 714-residue protein sequence, read N- to C-terminus: ATP-dependent DNA helicase DinG (714 aa).

In terms of domain architecture, Helicase ATP-binding spans 17–294; it reads ALQDQIPDFI…TCMEQFRPKT (278 aa). Residue 54-61 participates in ATP binding; sequence APTGVGKT. [4Fe-4S] cluster contacts are provided by cysteine 120, cysteine 194, cysteine 199, and cysteine 205. Residues 248-251 carry the DEAH box motif; the sequence is DEGH. The Helicase C-terminal domain maps to 517-698; it reads HIAEMAAYFR…VFPIEQPAVP (182 aa).

Belongs to the helicase family. DinG subfamily. Type 1 sub-subfamily. [4Fe-4S] cluster is required as a cofactor.

It carries out the reaction Couples ATP hydrolysis with the unwinding of duplex DNA at the replication fork by translocating in the 5'-3' direction. This creates two antiparallel DNA single strands (ssDNA). The leading ssDNA polymer is the template for DNA polymerase III holoenzyme which synthesizes a continuous strand.. The enzyme catalyses ATP + H2O = ADP + phosphate + H(+). In terms of biological role, DNA-dependent ATPase and 5'-3' DNA helicase. Unwinds D-loops, R-loops, forked DNA and G-quadruplex DNA. The polypeptide is ATP-dependent DNA helicase DinG (Salmonella typhimurium (strain LT2 / SGSC1412 / ATCC 700720)).